The sequence spans 559 residues: NXPE family member 3 (559 aa).

Residues 1-30 form the signal peptide; the sequence is MWTNFFKLRLFCCLLAVLMVVVLVINVTQV. 3 N-linked (GlcNAc...) asparagine glycosylation sites follow: Asn-237, Asn-292, and Asn-346.

This sequence belongs to the NXPE family.

The protein resides in the secreted. The sequence is that of NXPE family member 3 (NXPE3) from Homo sapiens (Human).